Reading from the N-terminus, the 165-residue chain is Chorismate pyruvate-lyase (165 aa).

Substrate-binding residues include M35, R77, L115, and E156.

Belongs to the UbiC family. As to quaternary structure, monomer.

The protein localises to the cytoplasm. The enzyme catalyses chorismate = 4-hydroxybenzoate + pyruvate. The protein operates within cofactor biosynthesis; ubiquinone biosynthesis. Functionally, removes the pyruvyl group from chorismate, with concomitant aromatization of the ring, to provide 4-hydroxybenzoate (4HB) for the ubiquinone pathway. The chain is Chorismate pyruvate-lyase from Citrobacter koseri (strain ATCC BAA-895 / CDC 4225-83 / SGSC4696).